The primary structure comprises 99 residues: uncharacterized protein (99 aa).

This is an uncharacterized protein from Escherichia coli O157:H7.